Consider the following 174-residue polypeptide: Large ribosomal subunit protein uL10 (174 aa).

It belongs to the universal ribosomal protein uL10 family. As to quaternary structure, part of the ribosomal stalk of the 50S ribosomal subunit. The N-terminus interacts with L11 and the large rRNA to form the base of the stalk. The C-terminus forms an elongated spine to which L12 dimers bind in a sequential fashion forming a multimeric L10(L12)X complex.

Its function is as follows. Forms part of the ribosomal stalk, playing a central role in the interaction of the ribosome with GTP-bound translation factors. The chain is Large ribosomal subunit protein uL10 from Anaeromyxobacter dehalogenans (strain 2CP-C).